A 418-amino-acid chain; its full sequence is Gamma-glutamyl phosphate reductase (418 aa).

This sequence belongs to the gamma-glutamyl phosphate reductase family.

It is found in the cytoplasm. The catalysed reaction is L-glutamate 5-semialdehyde + phosphate + NADP(+) = L-glutamyl 5-phosphate + NADPH + H(+). Its pathway is amino-acid biosynthesis; L-proline biosynthesis; L-glutamate 5-semialdehyde from L-glutamate: step 2/2. In terms of biological role, catalyzes the NADPH-dependent reduction of L-glutamate 5-phosphate into L-glutamate 5-semialdehyde and phosphate. The product spontaneously undergoes cyclization to form 1-pyrroline-5-carboxylate. The chain is Gamma-glutamyl phosphate reductase from Halothermothrix orenii (strain H 168 / OCM 544 / DSM 9562).